The sequence spans 148 residues: U5-hexatoxin-Hi1a (148 aa).

A signal peptide spans 1-21 (MNFSVVAVALVVVLTVHFTDG). The propeptide occupies 22–38 (QETSSSLPSPPSPLPGR). Residues 125–148 (TPSTTVTTPTPTTETPTTETPSTP) are disordered.

Contains 2 disulfide bonds. As to expression, expressed by the venom gland.

It localises to the secreted. Functionally, probable ion channel inhibitor. This chain is U5-hexatoxin-Hi1a, found in Hadronyche infensa (Fraser island funnel-web spider).